The following is a 395-amino-acid chain: Sensor protein DltS (395 aa).

2 helical membrane-spanning segments follow: residues 9-29 (FVFLTMSILIVVVLFLFAVSN) and 136-156 (FLILVFTIFGFCLLAAVSLYL). In terms of domain architecture, Histidine kinase spans 177-387 (DASHELKTPI…RLEVQLPIDG (211 aa)). Histidine 180 carries the post-translational modification Phosphohistidine; by autocatalysis.

The protein localises to the cell membrane. The enzyme catalyses ATP + protein L-histidine = ADP + protein N-phospho-L-histidine.. In terms of biological role, member of the two-component regulatory system DltS/DltR. Regulates the expression of the dlt operon. Probably phosphorylates DltR. The polypeptide is Sensor protein DltS (dltS) (Streptococcus agalactiae serotype III (strain NEM316)).